The chain runs to 355 residues: Elongation factor Ts (355 aa).

Positions 82–85 (TDFV) are involved in Mg(2+) ion dislocation from EF-Tu.

This sequence belongs to the EF-Ts family.

The protein resides in the cytoplasm. Associates with the EF-Tu.GDP complex and induces the exchange of GDP to GTP. It remains bound to the aminoacyl-tRNA.EF-Tu.GTP complex up to the GTP hydrolysis stage on the ribosome. The chain is Elongation factor Ts from Helicobacter pylori (strain P12).